The sequence spans 196 residues: Ribonuclease HII (196 aa).

An RNase H type-2 domain is found at 9–196; the sequence is RLVAGVDEVG…KPVRRALGIE (188 aa). A divalent metal cation contacts are provided by aspartate 15, glutamate 16, and aspartate 107.

This sequence belongs to the RNase HII family. Mn(2+) is required as a cofactor. It depends on Mg(2+) as a cofactor.

It is found in the cytoplasm. The enzyme catalyses Endonucleolytic cleavage to 5'-phosphomonoester.. Its function is as follows. Endonuclease that specifically degrades the RNA of RNA-DNA hybrids. The chain is Ribonuclease HII from Aeromonas hydrophila subsp. hydrophila (strain ATCC 7966 / DSM 30187 / BCRC 13018 / CCUG 14551 / JCM 1027 / KCTC 2358 / NCIMB 9240 / NCTC 8049).